Consider the following 370-residue polypeptide: GDSL esterase/lipase At1g33811 (370 aa).

The N-terminal stretch at 1-24 (MGILRFVLLISLNLVLFGFKTTVS) is a signal peptide. The Nucleophile role is filled by Ser-41. 3 N-linked (GlcNAc...) asparagine glycosylation sites follow: Asn-203, Asn-241, and Asn-242. Catalysis depends on residues Asp-336 and His-339.

It belongs to the 'GDSL' lipolytic enzyme family.

It localises to the secreted. The protein is GDSL esterase/lipase At1g33811 of Arabidopsis thaliana (Mouse-ear cress).